The chain runs to 342 residues: 4-hydroxy-3-methylbut-2-enyl diphosphate reductase (342 aa).

Position 47 (Cys-47) interacts with [4Fe-4S] cluster. Residues His-78 and His-111 each contribute to the (2E)-4-hydroxy-3-methylbut-2-enyl diphosphate site. Positions 78 and 111 each coordinate dimethylallyl diphosphate. Isopentenyl diphosphate-binding residues include His-78 and His-111. Cys-133 contacts [4Fe-4S] cluster. Position 161 (His-161) interacts with (2E)-4-hydroxy-3-methylbut-2-enyl diphosphate. His-161 contributes to the dimethylallyl diphosphate binding site. His-161 provides a ligand contact to isopentenyl diphosphate. Residue Glu-163 is the Proton donor of the active site. Thr-201 serves as a coordination point for (2E)-4-hydroxy-3-methylbut-2-enyl diphosphate. Cys-231 is a binding site for [4Fe-4S] cluster. Ser-259, Ser-260, Asn-261, and Ser-303 together coordinate (2E)-4-hydroxy-3-methylbut-2-enyl diphosphate. Dimethylallyl diphosphate-binding residues include Ser-259, Ser-260, Asn-261, and Ser-303. The isopentenyl diphosphate site is built by Ser-259, Ser-260, Asn-261, and Ser-303.

Belongs to the IspH family. [4Fe-4S] cluster is required as a cofactor.

It catalyses the reaction isopentenyl diphosphate + 2 oxidized [2Fe-2S]-[ferredoxin] + H2O = (2E)-4-hydroxy-3-methylbut-2-enyl diphosphate + 2 reduced [2Fe-2S]-[ferredoxin] + 2 H(+). It carries out the reaction dimethylallyl diphosphate + 2 oxidized [2Fe-2S]-[ferredoxin] + H2O = (2E)-4-hydroxy-3-methylbut-2-enyl diphosphate + 2 reduced [2Fe-2S]-[ferredoxin] + 2 H(+). It participates in isoprenoid biosynthesis; dimethylallyl diphosphate biosynthesis; dimethylallyl diphosphate from (2E)-4-hydroxy-3-methylbutenyl diphosphate: step 1/1. Its pathway is isoprenoid biosynthesis; isopentenyl diphosphate biosynthesis via DXP pathway; isopentenyl diphosphate from 1-deoxy-D-xylulose 5-phosphate: step 6/6. Functionally, catalyzes the conversion of 1-hydroxy-2-methyl-2-(E)-butenyl 4-diphosphate (HMBPP) into a mixture of isopentenyl diphosphate (IPP) and dimethylallyl diphosphate (DMAPP). Acts in the terminal step of the DOXP/MEP pathway for isoprenoid precursor biosynthesis. The sequence is that of 4-hydroxy-3-methylbut-2-enyl diphosphate reductase from Anaplasma marginale (strain Florida).